The primary structure comprises 436 residues: Adenylosuccinate synthetase (436 aa).

GTP is bound by residues 12–18 and 40–42; these read GDEGKGK and GHT. Asp13 (proton acceptor) is an active-site residue. Mg(2+) is bound by residues Asp13 and Gly40. Residues 13-16, 38-41, Thr130, Arg144, Gln230, Thr245, and Arg309 each bind IMP; these read DEGK and NAGH. The active-site Proton donor is His41. 305-311 contributes to the substrate binding site; it reads TTTGRPR. GTP is bound by residues Arg311, 337–339, and 419–421; these read KLD and SVG.

This sequence belongs to the adenylosuccinate synthetase family. Homodimer. Mg(2+) is required as a cofactor.

It is found in the cytoplasm. The enzyme catalyses IMP + L-aspartate + GTP = N(6)-(1,2-dicarboxyethyl)-AMP + GDP + phosphate + 2 H(+). It functions in the pathway purine metabolism; AMP biosynthesis via de novo pathway; AMP from IMP: step 1/2. Its function is as follows. Plays an important role in the de novo pathway of purine nucleotide biosynthesis. Catalyzes the first committed step in the biosynthesis of AMP from IMP. The protein is Adenylosuccinate synthetase of Myxococcus xanthus (strain DK1622).